Reading from the N-terminus, the 113-residue chain is Hydrogenase maturation factor HypA (113 aa).

Position 2 (histidine 2) interacts with Ni(2+). Positions 73, 76, 89, and 92 each coordinate Zn(2+).

This sequence belongs to the HypA/HybF family.

Involved in the maturation of [NiFe] hydrogenases. Required for nickel insertion into the metal center of the hydrogenase. In Methylocella silvestris (strain DSM 15510 / CIP 108128 / LMG 27833 / NCIMB 13906 / BL2), this protein is Hydrogenase maturation factor HypA.